A 162-amino-acid polypeptide reads, in one-letter code: Auracyanin-A (162 aa).

The signal sequence occupies residues 1–22 (MKITLRMMVLAVLTAMAMVLAA). Cysteine 23 carries the N-palmitoyl cysteine lipid modification. Residue cysteine 23 is the site of S-diacylglycerol cysteine attachment. Residues 42–162 (VTIEIGSKGE…PLMQGKLVVN (121 aa)) form the Plastocyanin-like domain. Cu cation is bound by residues histidine 81, cysteine 146, histidine 151, and methionine 155.

Monomer. Cu cation is required as a cofactor.

The protein localises to the cell membrane. In terms of biological role, probably a soluble electron acceptor for the integral membrane protein electron transfer alternative complex III (ACIII). This is Auracyanin-A from Chloroflexus aurantiacus (strain ATCC 29366 / DSM 635 / J-10-fl).